The sequence spans 298 residues: Tyrosine recombinase XerC (298 aa).

The 84-residue stretch at 1-84 (MNHIQDAFLN…TLRTFYEYWM (84 aa)) folds into the Core-binding (CB) domain. The 182-residue stretch at 105–286 (YLPQFFYEEE…SNQQLRKVYL (182 aa)) folds into the Tyr recombinase domain. Catalysis depends on residues Arg-145, Lys-169, His-238, Arg-241, and His-264. The active-site O-(3'-phospho-DNA)-tyrosine intermediate is the Tyr-273.

Belongs to the 'phage' integrase family. XerC subfamily. As to quaternary structure, forms a cyclic heterotetrameric complex composed of two molecules of XerC and two molecules of XerD.

The protein localises to the cytoplasm. Its function is as follows. Site-specific tyrosine recombinase, which acts by catalyzing the cutting and rejoining of the recombining DNA molecules. The XerC-XerD complex is essential to convert dimers of the bacterial chromosome into monomers to permit their segregation at cell division. It also contributes to the segregational stability of plasmids. This chain is Tyrosine recombinase XerC, found in Staphylococcus aureus (strain USA300).